Consider the following 148-residue polypeptide: HTH-type transcriptional regulator Rv2324 (148 aa).

The region spanning 4–65 (LDDTDERILA…VVDRNALGWN (62 aa)) is the HTH asnC-type domain. The H-T-H motif DNA-binding region spans 23 to 42 (FAEIGHKVSLSAPAVKRRVD).

Homodimer. Forms oligomers.

The DNA-binding activity of Rv2324 is modulated by interaction of Rv2324 with amino acids. Aspartate is the only effector amino acid that completely abolishes DNA binding. The majority of amino acids induce a dimer-tetramer or dimer-hexamer oligomeric transition. In response to amino-acid binding, adopts an open quaternary association, which is a part of the functional requirement to bind to non-symmetrically distributed target DNA binding sites. Functionally, transcriptional regulator involved in growth, DNA replication and damage control. Plays a crucial role in regulating survival and growth of M.tuberculosis. Could function as a global regulator in both the latent/persistent and active phases of growth. Binds to its own promoter region and to promoters of multiple metabolic genes, such as serB2, lat, ald and roc operon. In vitro, interacts with intrinsically curved and non-curved DNA molecules, and with both supercoiled and linear DNA, with higher affinity for supercoiled DNA. Binds to DNA recombination, replication and repair intermediates. This is HTH-type transcriptional regulator Rv2324 from Mycobacterium tuberculosis (strain ATCC 25618 / H37Rv).